The chain runs to 146 residues: D-aminoacyl-tRNA deacylase (146 aa).

The Gly-cisPro motif, important for rejection of L-amino acids signature appears at 137-138; that stretch reads GP.

This sequence belongs to the DTD family. In terms of assembly, homodimer.

It localises to the cytoplasm. The catalysed reaction is glycyl-tRNA(Ala) + H2O = tRNA(Ala) + glycine + H(+). It catalyses the reaction a D-aminoacyl-tRNA + H2O = a tRNA + a D-alpha-amino acid + H(+). Functionally, an aminoacyl-tRNA editing enzyme that deacylates mischarged D-aminoacyl-tRNAs. Also deacylates mischarged glycyl-tRNA(Ala), protecting cells against glycine mischarging by AlaRS. Acts via tRNA-based rather than protein-based catalysis; rejects L-amino acids rather than detecting D-amino acids in the active site. By recycling D-aminoacyl-tRNA to D-amino acids and free tRNA molecules, this enzyme counteracts the toxicity associated with the formation of D-aminoacyl-tRNA entities in vivo and helps enforce protein L-homochirality. In Cellvibrio japonicus (strain Ueda107) (Pseudomonas fluorescens subsp. cellulosa), this protein is D-aminoacyl-tRNA deacylase.